Consider the following 198-residue polypeptide: COMM domain-containing protein 9 (198 aa).

Ala-2 is subject to N-acetylalanine. Residues 122 to 196 (RLVDLDWRVD…RIRDQLSAVA (75 aa)) form the COMM domain.

Belongs to the COMM domain-containing protein 9 family. In terms of assembly, component of the commander complex consisting of the CCC subcomplex and the retriever subcomplex. Component of the CCC (COMMD/CCDC22/CCDC93) subcomplex consisting of COMMD1, COMMD2, COMMD3, COMMD4, COMMD5, COMMD6, COMMD7, COMMD8, COMMD9, COMMD10, CCDC22 and CCDC93; within the complex forms a heterodimer with COMMD7. Interacts with RELB and NFKB1/p105. Interacts with CCDC22, CCDC93, SCNN1B, CUL1.

The protein localises to the nucleus. Its subcellular location is the cytoplasmic vesicle. Its function is as follows. Scaffold protein in the commander complex that is essential for endosomal recycling of transmembrane cargos; the commander complex is composed of the CCC subcomplex and the retriever subcomplex. May modulate activity of cullin-RING E3 ubiquitin ligase (CRL) complexes. May down-regulate activation of NF-kappa-B. Modulates Na(+) transport in epithelial cells by regulation of apical cell surface expression of amiloride-sensitive sodium channel (ENaC) subunits. The protein is COMM domain-containing protein 9 (Commd9) of Mus musculus (Mouse).